We begin with the raw amino-acid sequence, 433 residues long: Enolase (433 aa).

Residue Gln163 participates in (2R)-2-phosphoglycerate binding. Glu205 functions as the Proton donor in the catalytic mechanism. Mg(2+) contacts are provided by Asp241, Glu289, and Asp316. (2R)-2-phosphoglycerate is bound by residues Lys341, Arg370, Ser371, and Lys392. Lys341 (proton acceptor) is an active-site residue.

This sequence belongs to the enolase family. Requires Mg(2+) as cofactor.

The protein resides in the cytoplasm. It is found in the secreted. Its subcellular location is the cell surface. It catalyses the reaction (2R)-2-phosphoglycerate = phosphoenolpyruvate + H2O. Its pathway is carbohydrate degradation; glycolysis; pyruvate from D-glyceraldehyde 3-phosphate: step 4/5. Catalyzes the reversible conversion of 2-phosphoglycerate (2-PG) into phosphoenolpyruvate (PEP). It is essential for the degradation of carbohydrates via glycolysis. This Treponema denticola (strain ATCC 35405 / DSM 14222 / CIP 103919 / JCM 8153 / KCTC 15104) protein is Enolase.